A 34-amino-acid chain; its full sequence is Ribonuclease PL1 (34 aa).

The N-linked (GlcNAc...) asparagine; partial glycan is linked to N4. The Proton acceptor role is filled by H15.

It belongs to the pancreatic ribonuclease family.

The protein resides in the lysosome. The enzyme catalyses an [RNA] containing cytidine + H2O = an [RNA]-3'-cytidine-3'-phosphate + a 5'-hydroxy-ribonucleotide-3'-[RNA].. It catalyses the reaction an [RNA] containing uridine + H2O = an [RNA]-3'-uridine-3'-phosphate + a 5'-hydroxy-ribonucleotide-3'-[RNA].. The polypeptide is Ribonuclease PL1 (Sus scrofa (Pig)).